The primary structure comprises 225 residues: UPF0758 protein BcerKBAB4_4299 (225 aa).

The 123-residue stretch at 103–225 folds into the MPN domain; the sequence is SIRSPEDCAS…FVSLKEKGHI (123 aa). 3 residues coordinate Zn(2+): H174, H176, and D187. The short motif at 174–187 is the JAMM motif element; it reads HNHPSGDPAPSRED.

Belongs to the UPF0758 family.

In Bacillus mycoides (strain KBAB4) (Bacillus weihenstephanensis), this protein is UPF0758 protein BcerKBAB4_4299.